Here is a 609-residue protein sequence, read N- to C-terminus: MATVHAALHAADASSSGSSSPVTASLYVGDLHPSVTEGILYDAFAEFKSLTSVRLCKDASSGRSLCYGYANFLSRQDANLAIEKKNNSLLNGKMIRVMWSVRAPDARRNGVGNVFVKNLPESVTNAVLQDMFKKFGNIVSCKVATLEDGKSRGYGFVQFEQEDAAHAAIQTLNSTIVADKEIYVGKFMKKTDRVKPEEKYTNLYMKNLDADVSEDLLREKFAEFGKIVSLAIAKDENRLCRGYAFVNFDNPEDARRAAETVNGTKFGSKCLYVGRAQKKAEREQLLREQFKEKHEEQKMIAKVSNIYVKNVNVAVTEEELRKHFSQCGTITSTKLMCDEKGKSKGFGFVCFSTPEEAIDAVKTFHGQMFHGKPLYVAIAQKKEDRKMQLQVQFGNRVEARKSSSSASVNPGTYAPLYYTNTHPGMVYQSYPLMWKSANMIGSSYPNSEAVTYPPMVANAPSKNRQNRIGKLDRNAVSYVPNVYQSTQMLPLSRDFSKQQHSRTYGRGKEMKKSIQQRQSETVGMEMQLLGELLHPLVEKLEPQLANKITGMLLEMDKSELLLLLKSPEDLAVRVDEAFEVLKSSKTNLTAPNTHRSDYLASGIAGVSIK.

4 consecutive RRM domains span residues 24-102 (ASLY…WSVR), 112-189 (GNVF…KFMK), 201-278 (TNLY…RAQK), and 304-381 (SNIY…IAQK). One can recognise a PABC domain in the interval 509–586 (EMKKSIQQRQ…AFEVLKSSKT (78 aa)).

This sequence belongs to the polyadenylate-binding protein type-1 family. In terms of tissue distribution, expressed predominantly in siliques.

It is found in the cytoplasm. The protein localises to the nucleus. Binds the poly(A) tail of mRNA. Appears to be an important mediator of the multiple roles of the poly(A) tail in mRNA biogenesis, stability and translation. The sequence is that of Polyadenylate-binding protein 7 (PAB7) from Arabidopsis thaliana (Mouse-ear cress).